Consider the following 509-residue polypeptide: 2-isopropylmalate synthase (509 aa).

In terms of domain architecture, Pyruvate carboxyltransferase spans 5 to 267; it reads IQIFDTTLRD…QTALNLEETK (263 aa). Positions 14, 202, 204, and 238 each coordinate Mn(2+). Residues 391–509 are regulatory domain; that stretch reads KLETLQLQYV…AAENVEKVGN (119 aa).

It belongs to the alpha-IPM synthase/homocitrate synthase family. LeuA type 1 subfamily. In terms of assembly, homodimer. Requires Mn(2+) as cofactor.

Its subcellular location is the cytoplasm. The enzyme catalyses 3-methyl-2-oxobutanoate + acetyl-CoA + H2O = (2S)-2-isopropylmalate + CoA + H(+). It participates in amino-acid biosynthesis; L-leucine biosynthesis; L-leucine from 3-methyl-2-oxobutanoate: step 1/4. Functionally, catalyzes the condensation of the acetyl group of acetyl-CoA with 3-methyl-2-oxobutanoate (2-ketoisovalerate) to form 3-carboxy-3-hydroxy-4-methylpentanoate (2-isopropylmalate). In Staphylococcus aureus (strain Mu3 / ATCC 700698), this protein is 2-isopropylmalate synthase.